A 311-amino-acid polypeptide reads, in one-letter code: Methionyl-tRNA formyltransferase (311 aa).

110–113 (SLLP) serves as a coordination point for (6S)-5,6,7,8-tetrahydrofolate.

Belongs to the Fmt family.

The enzyme catalyses L-methionyl-tRNA(fMet) + (6R)-10-formyltetrahydrofolate = N-formyl-L-methionyl-tRNA(fMet) + (6S)-5,6,7,8-tetrahydrofolate + H(+). Its function is as follows. Attaches a formyl group to the free amino group of methionyl-tRNA(fMet). The formyl group appears to play a dual role in the initiator identity of N-formylmethionyl-tRNA by promoting its recognition by IF2 and preventing the misappropriation of this tRNA by the elongation apparatus. This Streptococcus pyogenes serotype M2 (strain MGAS10270) protein is Methionyl-tRNA formyltransferase.